We begin with the raw amino-acid sequence, 349 residues long: MATQTLPAQMTALYYEKPRDFSIIKADVPLIDHDEVLLKVSMCGVCGTDQHIHEGEFIAKFPLIPGHEVIGTIVLAGNQVENVKVGDRVVCDVSETCHKCFFCQRGTPLFCESFEAHGVTLNGGFAEYAKFRAAKVFPIKNLTDEQATLVEPASCAVHGLDKIRPKPGSECLLIGAGPTGLMLAQLLKLNGAQRVVLAANKGMKMDIARKINAADEYIDLDRKDAANQWAQLKEDNPHGFDVVVEATGVESIVNDSINYVRRGGTLLVYGVYDNAARVTWSPTKIFQDEINIVGSFAQIHCFPRAVAYLESGKIRTDGMVTHVYKIEEYQEALDKMASRQCLKIAVKPN.

Zn(2+)-binding residues include Cys46, His67, Cys97, Cys100, Cys103, Cys111, and Glu151.

Belongs to the zinc-containing alcohol dehydrogenase family. Requires Zn(2+) as cofactor.

It is found in the cell projection. The catalysed reaction is D-arabinitol + NADP(+) = D-xylulose + NADPH + H(+). It catalyses the reaction D-arabinitol + NADP(+) = D-ribulose + NADPH + H(+). Functionally, D-arabinitol dehydrogenase which mostly produces D-arabinitol in haustoria, the appendages of the parasitic fungus that penetrate the host's tissue and draws nutrients from it. D-arabinitol accumulation may serve as a carbohydrate storage compound. D-arabinitol is also capable of quenching reactive oxygen species involved in host plant defense reactions, thus providing protection for the rust fungus during the pathogenic interaction. The sequence is that of D-arabinitol dehydrogenase 1 (ARD1) from Uromyces fabae (Rust fungus).